A 462-amino-acid polypeptide reads, in one-letter code: CD-NTase-associated protein 4 (462 aa).

An N-terminal endonuclease domain region spans residues Met-1–Glu-226. Catalysis depends on residues Asp-50, Glu-67, and Lys-69. Asp-50 contributes to the Mg(2+) binding site. A C-terminal SAVED domain region spans residues Asp-235 to Leu-462. Residues Lys-299–Arg-301, Trp-449, and Tyr-454 contribute to the 2',3',3'-c-tri-AMP site.

This sequence belongs to the Cap4 nuclease family. As to quaternary structure, a monomer in the absence of ligand, in its presence it forms oligomers. It depends on a divalent metal cation as a cofactor.

DNase activity is activated upon ligand binding. Inhibited by EDTA. Its function is as follows. Effector DNase of a CBASS antivirus system. CBASS (cyclic oligonucleotide-based antiphage signaling system) provides immunity against bacteriophage. The CD-NTase protein synthesizes cyclic nucleotides in response to infection; these serve as specific second messenger signals. The signals activate a diverse range of effectors, leading to bacterial cell death and thus abortive phage infection. A type II-C(AAAA) CBASS system. Functionally, binds cyclic nucleotide second messengers (synthesized by CdnD, the cognate CD-NTase in the CBASS operon). Ligand binding activates it to endonucleolytically degrade dsDNA to approximately 6 bp length fragments, with a preference for 5'-C or 5'-G cleavage site. The minor product of CdnD is the activating nucleotide; also binds the major product (2',3',3'-cyclic AMP-AMP-AMP) but is not activated by it. Only binds DNA in the presence of ligand. Is not activated by c-di-AMP, c-di-GMP, 3'3'-cyclic GMP-AMP (3'3'-cGAMP) or 3',3',3'-cyclic AMP-AMP-GMP. This is CD-NTase-associated protein 4 from Acinetobacter sp. (strain ATCC 27244 / 9458).